A 206-amino-acid polypeptide reads, in one-letter code: Ras-related protein O-RAL (206 aa).

G21–S28 is a binding site for GTP. Residues Y43 to Y51 carry the Effector region motif. Residues D68 to Q72 and N128 to D131 each bind GTP. Positions K180 to G189 are enriched in basic and acidic residues. The disordered stretch occupies residues K180–L206. C203 bears the Cysteine methyl ester mark. A lipid anchor (S-geranylgeranyl cysteine) is attached at C203. A propeptide spans C204–L206 (removed in mature form).

This sequence belongs to the small GTPase superfamily. Ras family.

Its subcellular location is the cell membrane. It catalyses the reaction GTP + H2O = GDP + phosphate + H(+). In Diplobatis ommata (Ocellated electric ray), this protein is Ras-related protein O-RAL.